The following is a 437-amino-acid chain: MTDTIFALSSGQPPAGIGVIRISGPGAGAALSSLAGRLPSPRRATLATLADPRDGTHLDRTMVLWLPGPATATGEDCAELHLHGGRAVIAAVEAALSSLPGLRRARPGEFTRRAFANGRIDLAEAEGLADLLSAETELQRRTALAMAEGALSREVDEWRTTLLQISARLEAALDFSDEDDVGAGDGTQRASLLPPHFAADCISLACSLNTWLDRPRAEPLKEGFRVVLAGPPNAGKSTLFNALVEHEAAITAAEPGTTRDLLTHAAALDGVPFTFVDTAGLRDEGAGEIERIGIARARAAAEKADLILWLGPEGLGPAGRTLWEIAARADDPGAGRKSQCAFHLSAVTGEGMAAFRSALIAHARSALPAPGEAALNQRQHTHLSEVARALEDAAAEQDPLLAAENLRLGRRGLDALVGRTGTEDMLDTLFGRFCIGK.

The (6S)-5-formyl-5,6,7,8-tetrahydrofolate site is built by Arg-21, Glu-79, and Arg-119. A TrmE-type G domain is found at 223-364; it reads GFRVVLAGPP…FRSALIAHAR (142 aa). GTP contacts are provided by residues 233 to 238, 252 to 258, and 277 to 280; these read NAGKST, AAEPGTT, and DTAG. Residues Ser-237 and Thr-258 each contribute to the Mg(2+) site. Lys-437 provides a ligand contact to (6S)-5-formyl-5,6,7,8-tetrahydrofolate.

This sequence belongs to the TRAFAC class TrmE-Era-EngA-EngB-Septin-like GTPase superfamily. TrmE GTPase family. Homodimer. Heterotetramer of two MnmE and two MnmG subunits. The cofactor is K(+).

Its subcellular location is the cytoplasm. In terms of biological role, exhibits a very high intrinsic GTPase hydrolysis rate. Involved in the addition of a carboxymethylaminomethyl (cmnm) group at the wobble position (U34) of certain tRNAs, forming tRNA-cmnm(5)s(2)U34. This is tRNA modification GTPase MnmE from Novosphingobium aromaticivorans (strain ATCC 700278 / DSM 12444 / CCUG 56034 / CIP 105152 / NBRC 16084 / F199).